Here is a 20-residue protein sequence, read N- to C-terminus: Maximin-Hu (20 aa).

It belongs to the bombinin family. As to expression, expressed by the skin glands.

It is found in the secreted. Functionally, has antimicrobial activity. This chain is Maximin-Hu, found in Bombina maxima (Giant fire-bellied toad).